Here is a 486-residue protein sequence, read N- to C-terminus: UDP-GalNAc:beta-1,3-N-acetylgalactosaminyltransferase 2 (486 aa).

Residues 1 to 10 are Cytoplasmic-facing; sequence MRHLLFLCPC. A helical; Signal-anchor for type II membrane protein membrane pass occupies residues 11 to 31; sequence VIGVAFHLWLFNFSGLFSWFL. Over 32-486 the chain is Lumenal; sequence VWSPHSYDIV…CGNPCACEDR (455 aa). Asn103 and Asn160 each carry an N-linked (GlcNAc...) asparagine glycan.

The protein belongs to the glycosyltransferase 31 family.

It localises to the golgi apparatus membrane. Its subcellular location is the endoplasmic reticulum. The enzyme catalyses 3-O-(N-acetyl-beta-D-glucosaminyl-(1-&gt;4)-alpha-D-mannosyl)-L-threonyl-[protein] + UDP-N-acetyl-alpha-D-galactosamine = 3-O-[beta-D-GalNAc-(1-&gt;3)-beta-D-GlcNAc-(1-&gt;4)-alpha-D-Man]-L-Thr-[protein] + UDP + H(+). It functions in the pathway protein modification; protein glycosylation. Its function is as follows. Beta-1,3-N-acetylgalactosaminyltransferase that synthesizes a unique carbohydrate structure, GalNAc-beta-1-3GlcNAc, on N- and O-glycans. Has no galactose nor galactosaminyl transferase activity toward any acceptor substrate. Involved in alpha-dystroglycan (dag1) glycosylation. The sequence is that of UDP-GalNAc:beta-1,3-N-acetylgalactosaminyltransferase 2 (b3galnt2) from Xenopus laevis (African clawed frog).